Consider the following 237-residue polypeptide: Ribonuclease PH (237 aa).

Residues arginine 86 and 124–126 (GTR) each bind phosphate.

It belongs to the RNase PH family. Homohexameric ring arranged as a trimer of dimers.

It catalyses the reaction tRNA(n+1) + phosphate = tRNA(n) + a ribonucleoside 5'-diphosphate. Phosphorolytic 3'-5' exoribonuclease that plays an important role in tRNA 3'-end maturation. Removes nucleotide residues following the 3'-CCA terminus of tRNAs; can also add nucleotides to the ends of RNA molecules by using nucleoside diphosphates as substrates, but this may not be physiologically important. Probably plays a role in initiation of 16S rRNA degradation (leading to ribosome degradation) during starvation. The chain is Ribonuclease PH from Rhodopseudomonas palustris (strain ATCC BAA-98 / CGA009).